Here is an 804-residue protein sequence, read N- to C-terminus: MAESGEALGTVPEHERILQEIESTDTACVGPTLRSVYDGQPNAHKKFMEKLDACIRNHDKEIEKMCNFHHQGFVDAITELLKVRADAEKLKVQVTDTNRRFQDAGKEVIEQTEDIIRCRIQQRNITTVVEKLQLCLPVLEMYSKLKEQMSMQRYYSALKTMEQLENVYFPRVSQYRFCQLMMDTLPKLREDIKDISMSDLKDFLESIRKHSDKIGETAMKQAQQQKSFSIAVQKQTNMRFGKNMHVNNDRTLEEKSDIILKHTLEEEAENDEEVLTVQDLVDFSPVYRCSHIYSALGDEETFENYYRKQRKKQARLVLQPQSSVHETVDGYRRYFTQIVGFFVVEDHILHVTQGLVTRAYTDELWNMALSKIIAVLRAHSSYCTDPDLVLELKNLIVIFADTLQGYGFSVNRLFDLLFEIRDQYNETLLKKWAGIFRDIFEEDNYSPIPIGSEEEYKMVISKFPFQDPDLEKQSFPKKFPMSQSVPLIYIQVKEFIYASLKFSESLHRSSTEIDDMLRKSTNLLLTRILSSCLLNLIRKPHIGLTELVQIIINTTHLEQACKYLEDFITNITNISQETVHTTRLYGLSTFKDARHAAEGEIYTKLNQKIDEFVQLADYDWTMAESDGRASGYLMDLINFLRSIFQVFTHLPGKVAQTACMSACQHLSTSLMQMLLDSELKQISMGAVQQFNLDVIQCELFASSEPVPGFQGDTLQLAFIDLRQLLDLFMVWDWSTYLADYGQPASKYLRVNPHAALTLLEKMKDTSKKNNIFAQFRKNDRDRQKLIETVVKQLRGLVTGMSQHM.

Belongs to the SEC15 family. The exocyst complex is composed of EXOC1, EXOC2, EXOC3, EXOC4, EXOC5, EXOC6, EXOC7 and EXOC8. Interacts with CNTRL. Interacts with RAB11A in a GTP-dependent manner.

It localises to the cytoplasm. The protein localises to the perinuclear region. It is found in the cell projection. Its subcellular location is the growth cone. The protein resides in the midbody. It localises to the midbody ring. In terms of biological role, component of the exocyst complex involved in the docking of exocytic vesicles with fusion sites on the plasma membrane. Together with RAB11A, RAB3IP, RAB8A, PARD3, PRKCI, ANXA2, CDC42 and DNMBP promotes transcytosis of PODXL to the apical membrane initiation sites (AMIS), apical surface formation and lumenogenesis. This chain is Exocyst complex component 6 (Exoc6), found in Rattus norvegicus (Rat).